We begin with the raw amino-acid sequence, 341 residues long: KRR1 small subunit processome component homolog (341 aa).

Residues 126–194 (DIIKIGNLVH…VRDIVLETMN (69 aa)) form the KH domain. The segment covering 230–244 (KNKNISKRKQPKSRK) has biased composition (basic residues). A disordered region spans residues 230 to 327 (KNKNISKRKQ…RPSEASKVDV (98 aa)). Residues 271-341 (FLNKEQKQAK…AKLLKANKQK (71 aa)) are a coiled coil. Basic and acidic residues-rich tracts occupy residues 272–303 (LNKEQKQAKRQQERVAKQAEAAKKQDERRNKD) and 313–327 (EQNRKRPSEASKVDV).

Belongs to the KRR1 family. In terms of assembly, monomer. Component of the ribosomal small subunit (SSU) processome.

It localises to the nucleus. The protein localises to the nucleolus. Required for 40S ribosome biogenesis. Involved in nucleolar processing of pre-18S ribosomal RNA and ribosome assembly. Binds to RNA. Required for female germline development, cell viability during eye development and for survival of dividing cells and epithelial cells during early wing disk development. The sequence is that of KRR1 small subunit processome component homolog from Drosophila grimshawi (Hawaiian fruit fly).